Reading from the N-terminus, the 273-residue chain is UPF0380 protein YfjQ (273 aa).

Belongs to the UPF0380 family.

The protein is UPF0380 protein YfjQ (yfjQ) of Escherichia coli (strain K12).